A 1178-amino-acid polypeptide reads, in one-letter code: DNA-directed RNA polymerase subunit beta (1178 aa).

This sequence belongs to the RNA polymerase beta chain family. In terms of assembly, the RNAP catalytic core consists of 2 alpha, 1 beta, 1 beta' and 1 omega subunit. When a sigma factor is associated with the core the holoenzyme is formed, which can initiate transcription.

It catalyses the reaction RNA(n) + a ribonucleoside 5'-triphosphate = RNA(n+1) + diphosphate. Functionally, DNA-dependent RNA polymerase catalyzes the transcription of DNA into RNA using the four ribonucleoside triphosphates as substrates. The polypeptide is DNA-directed RNA polymerase subunit beta (Treponema pallidum (strain Nichols)).